Consider the following 479-residue polypeptide: Aspartyl/glutamyl-tRNA(Asn/Gln) amidotransferase subunit B (479 aa).

Belongs to the GatB/GatE family. GatB subfamily. As to quaternary structure, heterotrimer of A, B and C subunits.

It carries out the reaction L-glutamyl-tRNA(Gln) + L-glutamine + ATP + H2O = L-glutaminyl-tRNA(Gln) + L-glutamate + ADP + phosphate + H(+). The catalysed reaction is L-aspartyl-tRNA(Asn) + L-glutamine + ATP + H2O = L-asparaginyl-tRNA(Asn) + L-glutamate + ADP + phosphate + 2 H(+). Functionally, allows the formation of correctly charged Asn-tRNA(Asn) or Gln-tRNA(Gln) through the transamidation of misacylated Asp-tRNA(Asn) or Glu-tRNA(Gln) in organisms which lack either or both of asparaginyl-tRNA or glutaminyl-tRNA synthetases. The reaction takes place in the presence of glutamine and ATP through an activated phospho-Asp-tRNA(Asn) or phospho-Glu-tRNA(Gln). In Streptococcus equi subsp. zooepidemicus (strain MGCS10565), this protein is Aspartyl/glutamyl-tRNA(Asn/Gln) amidotransferase subunit B.